We begin with the raw amino-acid sequence, 853 residues long: Aminotransferase PigE (853 aa).

Residue 503–504 (GT) participates in pyridoxal 5'-phosphate binding. Lys645 carries the N6-(pyridoxal phosphate)lysine modification. Thr680 serves as a coordination point for pyridoxal 5'-phosphate.

This sequence belongs to the class-III pyridoxal-phosphate-dependent aminotransferase family. As to quaternary structure, homodimer. The cofactor is pyridoxal 5'-phosphate.

It participates in antibiotic biosynthesis; prodigiosin biosynthesis. Involved in the biosynthesis of 2-methyl-3-n-amyl-pyrrole (MAP), one of the terminal products involved in the biosynthesis of the red antibiotic prodigiosin (Pig). Catalyzes the transamination to the aldehyde group of 3-acetyloctanal, resulting in an aminoketone, which spontaneously cyclizes to yield the dihydro form of MAP (H2MAP). The sequence is that of Aminotransferase PigE from Serratia sp. (strain FS14).